Here is a 203-residue protein sequence, read N- to C-terminus: Glycerol-3-phosphate acyltransferase (203 aa).

The next 6 helical transmembrane spans lie at 5-25 (IASIALVLLAYLSGSIPFSLL), 50-70 (TCGFSAFALAMGGDMLKGALP), 72-92 (IAAQALGLSPLAVVIVGTAAM), 115-135 (VVLTLAPLVALPGLAAWAVTF), 140-160 (ISAVASLTAAAVCGIAAAVLL), and 162-182 (LGMLPPAYAIFVWGAVAAIVF).

It belongs to the PlsY family. Probably interacts with PlsX.

The protein resides in the cell membrane. The enzyme catalyses an acyl phosphate + sn-glycerol 3-phosphate = a 1-acyl-sn-glycero-3-phosphate + phosphate. The protein operates within lipid metabolism; phospholipid metabolism. Catalyzes the transfer of an acyl group from acyl-phosphate (acyl-PO(4)) to glycerol-3-phosphate (G3P) to form lysophosphatidic acid (LPA). This enzyme utilizes acyl-phosphate as fatty acyl donor, but not acyl-CoA or acyl-ACP. This is Glycerol-3-phosphate acyltransferase from Roseiflexus sp. (strain RS-1).